A 138-amino-acid polypeptide reads, in one-letter code: Large ribosomal subunit protein uL14m (138 aa).

The protein belongs to the universal ribosomal protein uL14 family. Component of the mitochondrial large ribosomal subunit (mt-LSU). Mature yeast 74S mitochondrial ribosomes consist of a small (37S) and a large (54S) subunit. The 37S small subunit contains a 15S ribosomal RNA (15S mt-rRNA) and 34 different proteins. The 54S large subunit contains a 21S rRNA (21S mt-rRNA) and 46 different proteins.

The protein localises to the mitochondrion. Its function is as follows. Component of the mitochondrial ribosome (mitoribosome), a dedicated translation machinery responsible for the synthesis of mitochondrial genome-encoded proteins, including at least some of the essential transmembrane subunits of the mitochondrial respiratory chain. The mitoribosomes are attached to the mitochondrial inner membrane and translation products are cotranslationally integrated into the membrane. This chain is Large ribosomal subunit protein uL14m (MRPL38), found in Saccharomyces cerevisiae (strain ATCC 204508 / S288c) (Baker's yeast).